A 301-amino-acid chain; its full sequence is MKVGVIMGGISSEREISIQSGNSVVHALDKDKYEAIPIVLNEKEDLIEKVKGIDFALLALHGKFGEDGTVQSVLKTLGIPFSGCGPLSSAICMDKDMTKRILAFGNVRTARWEMVSSVDEIDYEKIENLGYPVFVKPNNGGSSVATTLVESKEAVKDAVLEALKYDTEVMIEEYIKGDEITCPIIDGKMLPVLAIKPKGKFFDIASKYGDGGADEFIVELNEDLHKEVEKMALETYKLLKCDVYARVDMLVKDNIPYVLEVNTLPGMTKNSLFPKSAAGINMSFEELLDTIIEKSLKVNRE.

In terms of domain architecture, ATP-grasp spans 99-293; sequence KRILAFGNVR…FEELLDTIIE (195 aa). 126-181 is a binding site for ATP; it reads IENLGYPVFVKPNNGGSSVATTLVESKEAVKDAVLEALKYDTEVMIEEYIKGDEIT. The Mg(2+) site is built by Asp-248, Glu-260, and Asn-262.

The protein belongs to the D-alanine--D-alanine ligase family. Mg(2+) serves as cofactor. Requires Mn(2+) as cofactor.

It localises to the cytoplasm. It carries out the reaction 2 D-alanine + ATP = D-alanyl-D-alanine + ADP + phosphate + H(+). It functions in the pathway cell wall biogenesis; peptidoglycan biosynthesis. Functionally, cell wall formation. This Clostridium perfringens (strain 13 / Type A) protein is D-alanine--D-alanine ligase A.